Consider the following 239-residue polypeptide: tRNA (guanine-N(1)-)-methyltransferase (239 aa).

Residues glycine 110 and valine 130–leucine 135 contribute to the S-adenosyl-L-methionine site.

It belongs to the RNA methyltransferase TrmD family. Homodimer.

It is found in the cytoplasm. It carries out the reaction guanosine(37) in tRNA + S-adenosyl-L-methionine = N(1)-methylguanosine(37) in tRNA + S-adenosyl-L-homocysteine + H(+). In terms of biological role, specifically methylates guanosine-37 in various tRNAs. The protein is tRNA (guanine-N(1)-)-methyltransferase of Borrelia turicatae (strain 91E135).